We begin with the raw amino-acid sequence, 295 residues long: HTH-type transcriptional regulator TrpI (295 aa).

Residues 6–63 (PSLNALRAFEAAARLHSISLAAEELHVTHGAVSRQVRLLEDDLGVALFGKDGRGVKLT) form the HTH lysR-type domain. A DNA-binding region (H-T-H motif) is located at residues 23–42 (ISLAAEELHVTHGAVSRQVR).

It belongs to the LysR transcriptional regulatory family. Homotetramer.

Its function is as follows. Activates the expression of the trpBA genes, which encode the two tryptophan synthase subunits, and represses initiation at its own promoter. Acts by binding to two adjacent sites in the intergenic region. In the absence of the inducer indoleglycerol phosphate (InGP), TrpI binds to site I. In the presence of InGP, TrpI binds to site I and site II. Binding to site II is site I dependent. InGP strongly stimulates binding to site II and is required for maximal activation of trpBA. In Pseudomonas aeruginosa (strain ATCC 15692 / DSM 22644 / CIP 104116 / JCM 14847 / LMG 12228 / 1C / PRS 101 / PAO1), this protein is HTH-type transcriptional regulator TrpI.